The primary structure comprises 984 residues: MRLLNIFTTLCLLLWSGAATNDGLTDVVEWDPYSLTINGDRVFIYSAEFHYQRMPVPELWLDIFQKFRANGFNTISVYFFWSYHEASKGSFDFETSGKNVQRVLDYAKEAGIYVIARAGPYCNAETSAGGLALWGSDGSMGTLRTNNAAYYQSWQPWIKEIGAILAKNQVTNGGPVILNQVENELQETVHSATNTLVLYMEQLETAFRAAGITVPFSHNEKGQRSQSWSTDYENVGGAVNVYGLDSYPGGLSCTNSNSGFSVVRNYYQWFSNYSYTQPSYFPEFEGGYFTPWGGSFYDECQSELDPSFPDVYYKNNIGQRTTLMSLYMAWGGTNWGHSAAPVVYTSYDYAAPLRETRQIRDKLSQTKLIGLFTRVSTDLLKTDMIGNGTGHSVSSTGIWSWVLRNPDTQAGFTVVQQASSGSRASVTFDVYLNTSLGAVTASDVNLNGRQSKILVTDYNFGNHTLLYASSDILTYGTFDVDVLVFYLEQGQIGQFALKTTSKLTYQVYGNSVFAANSSSTSTSQTFTYTQGAGQTVVQFSDGALVYLLDQPSAWKFWAPPTTSNPQVKPNEQIFVLGPYLVRNASISSGVAQIFGDNDNATTIEVYAGSSLTSIVWNGVSLSATKTKYGSYSASLPGTESRVISLPSLTNWESANSLPEKETSYDDSKWTVCNKTTTLSPIAPLTLPVLFSSDYGFYTGQKIYRGYFDGLTYTSINITCSGGLAFGWSAWLNGVLIGGNTGVATATTTNAVLDLTNFTSVIKSENNLVTVVVDYHGHDETSTAKGVENPRGILGAFLVPKPSASTGFKLWKIQGNAGGSANIDPVRGPMNEGGFYGERVGWHLPSSPSLPSDSTPLIGLNTSGISFYTTNFTLALDSDLDVPLGIKLSAPAGTIARVMFWINGYQYGKYVPHIGPQTVFPIPPGIINNQGSNKLALSLWAMTDAGARLTDVELVSYGVYESGFGFDRDWSYLQPGWDEGRLAYA.

The signal sequence occupies residues 1–19 (MRLLNIFTTLCLLLWSGAA). Tyrosine 78, asparagine 123, alanine 124, glutamate 125, and asparagine 183 together coordinate substrate. Residue glutamate 184 is the Proton donor of the active site. A substrate-binding site is contributed by tyrosine 247. A disulfide bridge links cysteine 253 with cysteine 300. Asparagine 272 carries an N-linked (GlcNAc...) asparagine glycan. The active-site Nucleophile is the glutamate 283. Tyrosine 349 is a substrate binding site. Residues asparagine 387, asparagine 433, asparagine 462, asparagine 516, asparagine 583, asparagine 599, asparagine 673, asparagine 716, asparagine 756, asparagine 860, and asparagine 870 are each glycosylated (N-linked (GlcNAc...) asparagine).

It belongs to the glycosyl hydrolase 35 family.

It localises to the secreted. The enzyme catalyses Hydrolysis of terminal non-reducing beta-D-galactose residues in beta-D-galactosides.. Cleaves beta-linked terminal galactosyl residues from gangliosides, glycoproteins, and glycosaminoglycans. The protein is Probable beta-galactosidase C (lacC) of Sclerotinia sclerotiorum (strain ATCC 18683 / 1980 / Ss-1) (White mold).